Reading from the N-terminus, the 254-residue chain is Claudin-16 (254 aa).

At 1–22 the chain is on the cytoplasmic side; that stretch reads MGPGLAASHVSFPDSLLAKMRD. Residues 23 to 43 traverse the membrane as a helical segment; the sequence is LLQYVACFFAFFSAGFLVVAT. At 44–98 the chain is on the extracellular side; it reads WTDCWMVNADDSLEVSTKCRGLWWECVTNAFDGIRTCDEYDSILAEHSLKLVVTR. The helical transmembrane segment at 99–119 threads the bilayer; the sequence is ALMITADILAGFGFITLLLGL. Residues 120 to 134 are Cytoplasmic-facing; the sequence is DCVKFLPDEPYIKVR. The chain crosses the membrane as a helical span at residues 135–155; it reads ISFVAGTTLLIAGAPGIIGSV. Residues 156–188 are Extracellular-facing; the sequence is WYAVDVYVERSSLVLHNIFLGIQYKFGWSCWLG. A helical membrane pass occupies residues 189 to 209; sequence MAGSLGCFLAGAILTCCLYLF. Topologically, residues 210–254 are cytoplasmic; the sequence is KDVGPERSYPYSTRKAYSTTAVSMPRSHAIPRTQTAKMYAVDTRV. The Interaction with TJP1 signature appears at 252–254; that stretch reads TRV.

This sequence belongs to the claudin family. As to quaternary structure, can form heteropolymeric tight junction strands with other claudins. Interacts with CLDN19. Interacts (via PDZ-binding motif TRV) with TJP1 (via PDZ domain). Cannot form tight junction strands on its own. Expressed preferentially in kidney.

It is found in the cell junction. The protein localises to the tight junction. It localises to the cell membrane. It carries out the reaction Mg(2+)(in) = Mg(2+)(out). The enzyme catalyses Ca(2+)(in) = Ca(2+)(out). The catalysed reaction is Na(+)(in) = Na(+)(out). It catalyses the reaction K(+)(in) = K(+)(out). It carries out the reaction Rb(+)(in) = Rb(+)(out). The enzyme catalyses Cs(+)(in) = Cs(+)(out). The catalysed reaction is Li(+)(in) = Li(+)(out). Forms paracellular channels: coassembles with CLDN19 into tight junction strands with cation-selective channels through the strands, conveying epithelial permeability in a process known as paracellular tight junction permeability. Involved in the maintenance of ion gradients along the nephron. In the thick ascending limb (TAL) of Henle's loop, facilitates sodium paracellular permeability from the interstitial compartment to the lumen, contributing to the lumen-positive transepithelial potential that drives paracellular magnesium and calcium reabsorption. This chain is Claudin-16 (CLDN16), found in Bos taurus (Bovine).